A 363-amino-acid polypeptide reads, in one-letter code: Aminomethyltransferase (363 aa).

The protein belongs to the GcvT family. As to quaternary structure, the glycine cleavage system is composed of four proteins: P, T, L and H.

It carries out the reaction N(6)-[(R)-S(8)-aminomethyldihydrolipoyl]-L-lysyl-[protein] + (6S)-5,6,7,8-tetrahydrofolate = N(6)-[(R)-dihydrolipoyl]-L-lysyl-[protein] + (6R)-5,10-methylene-5,6,7,8-tetrahydrofolate + NH4(+). In terms of biological role, the glycine cleavage system catalyzes the degradation of glycine. This is Aminomethyltransferase from Staphylococcus saprophyticus subsp. saprophyticus (strain ATCC 15305 / DSM 20229 / NCIMB 8711 / NCTC 7292 / S-41).